The primary structure comprises 109 residues: Nucleoid-associated protein CGSHiEE_00780 (109 aa).

It belongs to the YbaB/EbfC family. In terms of assembly, homodimer.

It is found in the cytoplasm. The protein localises to the nucleoid. Functionally, binds to DNA and alters its conformation. May be involved in regulation of gene expression, nucleoid organization and DNA protection. The chain is Nucleoid-associated protein CGSHiEE_00780 from Haemophilus influenzae (strain PittEE).